We begin with the raw amino-acid sequence, 459 residues long: MSYKLEKEAFVSNLTGSSSIETCGLLLIGIACNVLWVNMTARNILPKGNLGFLVEFFIFCLIPLFVIYVSSKVGVFTLCIASFLPSFVLHVISPINWDVLRRKPGCCLTKKNENTFDRRIAGVTFYRSQMMLVTVTCILAVDFTLFPRRYAKVETWGTSLMDLGVGSFMFSSGTVAGRKNDIKKPNAFKNVLWNSFILLILGFARMFLTKSINYQEHVSEYGMHWNFFFTLGFMALGVFFFRRSLKKVSYFNLATFITLLHHCLLVLTPFQKWALSAPRTNILAQNREGIASLPGYIAIYFYGMYTGSVVLADRPLMYTRAESWKRFQRLLFPLCILLVLYLVSNFLSVGVSRRLANTPYVANVAFINMFFLTIYILIDAYLFPSSVPYGSRVPKLLEDANNNGLLVFLIANVLTGVVNLSFDTLHSSNAKGLTIMTMYLFIICYMAHWLAQHGIRFRL.

N-linked (GlcNAc...) asparagine glycosylation occurs at Asn-13. 13 helical membrane-spanning segments follow: residues 20–40, 50–70, 73–93, 120–140, 156–176, 188–208, 221–241, 250–270, 290–310, 331–351, 364–384, 405–425, and 432–452; these read IETCGLLLIGIACNVLWVNMT, LGFLVEFFIFCLIPLFVIYVS, VGVFTLCIASFLPSFVLHVIS, IAGVTFYRSQMMLVTVTCILA, WGTSLMDLGVGSFMFSSGTVA, FKNVLWNSFILLILGFARMFL, YGMHWNFFFTLGFMALGVFFF, YFNLATFITLLHHCLLVLTPF, IASLPGYIAIYFYGMYTGSVV, LFPLCILLVLYLVSNFLSVGV, VAFINMFFLTIYILIDAYLFP, LLVFLIANVLTGVVNLSFDTL, and GLTIMTMYLFIICYMAHWLAQ.

It belongs to the PIGW family.

The protein resides in the endoplasmic reticulum membrane. The protein operates within glycolipid biosynthesis; glycosylphosphatidylinositol-anchor biosynthesis. Functionally, probable acetyltransferase, which acetylates the inositol ring of phosphatidylinositol during biosynthesis of GPI-anchor. Has a role in meiosis. This chain is GPI-anchored wall transfer protein 1 (gwt1), found in Schizosaccharomyces pombe (strain 972 / ATCC 24843) (Fission yeast).